The chain runs to 615 residues: Dihydroxy-acid dehydratase (615 aa).

Asp-81 lines the Mg(2+) pocket. Cys-122 lines the [2Fe-2S] cluster pocket. Residues Asp-123 and Lys-124 each contribute to the Mg(2+) site. Lys-124 bears the N6-carboxylysine mark. Cys-195 provides a ligand contact to [2Fe-2S] cluster. A Mg(2+)-binding site is contributed by Glu-491. The Proton acceptor role is filled by Ser-517.

Belongs to the IlvD/Edd family. Homodimer. [2Fe-2S] cluster serves as cofactor. Requires Mg(2+) as cofactor.

The catalysed reaction is (2R)-2,3-dihydroxy-3-methylbutanoate = 3-methyl-2-oxobutanoate + H2O. It carries out the reaction (2R,3R)-2,3-dihydroxy-3-methylpentanoate = (S)-3-methyl-2-oxopentanoate + H2O. Its pathway is amino-acid biosynthesis; L-isoleucine biosynthesis; L-isoleucine from 2-oxobutanoate: step 3/4. The protein operates within amino-acid biosynthesis; L-valine biosynthesis; L-valine from pyruvate: step 3/4. In terms of biological role, functions in the biosynthesis of branched-chain amino acids. Catalyzes the dehydration of (2R,3R)-2,3-dihydroxy-3-methylpentanoate (2,3-dihydroxy-3-methylvalerate) into 2-oxo-3-methylpentanoate (2-oxo-3-methylvalerate) and of (2R)-2,3-dihydroxy-3-methylbutanoate (2,3-dihydroxyisovalerate) into 2-oxo-3-methylbutanoate (2-oxoisovalerate), the penultimate precursor to L-isoleucine and L-valine, respectively. The sequence is that of Dihydroxy-acid dehydratase from Shewanella piezotolerans (strain WP3 / JCM 13877).